Here is a 337-residue protein sequence, read N- to C-terminus: MSGFYHKHFLKLLDFTPAELNSLLQLAAKLKADKKSGKEEAKLTGKNIALIFEKDSTRTRCSFEVAAYDQGARVTYLGPSGSQIGHKESIKDTARVLGRMYDGIQYRGYGQEIVETLAEYAGVPVWNGLTNEFHPTQLLADLLTMQEHLPGKAFNEMTLVYAGDARNNMGNSMLEAAALTGLDLRLVAPQACWPEAALVTECRALAQQNGGNITLTEDVAKGVEGADFIYTDVWVSMGEAKEKWAERIALLRDYQVNSKMMQLTGNPEVKFLHCLPAFHDDQTTLGKKMAEEFGLHGGMEVTDEVFESAASIVFDQAENRMHTIKAVMVATLSKLNN.

Residues 56-59, glutamine 83, arginine 107, and 134-137 contribute to the carbamoyl phosphate site; these read STRT and HPTQ. L-ornithine-binding positions include asparagine 168, aspartate 232, and 236 to 237; that span reads SM. Carbamoyl phosphate contacts are provided by residues 274–275 and arginine 320; that span reads CL.

This sequence belongs to the aspartate/ornithine carbamoyltransferase superfamily. OTCase family.

It localises to the cytoplasm. It carries out the reaction carbamoyl phosphate + L-ornithine = L-citrulline + phosphate + H(+). It participates in amino-acid biosynthesis; L-arginine biosynthesis; L-arginine from L-ornithine and carbamoyl phosphate: step 1/3. In terms of biological role, reversibly catalyzes the transfer of the carbamoyl group from carbamoyl phosphate (CP) to the N(epsilon) atom of ornithine (ORN) to produce L-citrulline. The chain is Ornithine carbamoyltransferase (argI) from Shigella flexneri.